The sequence spans 22 residues: 50 kDa cell wall protein (22 aa).

It is found in the secreted. Its subcellular location is the cell wall. This is 50 kDa cell wall protein from Nicotiana tabacum (Common tobacco).